The sequence spans 789 residues: Leucine-rich repeat and fibronectin type-III domain-containing protein 2 (789 aa).

The N-terminal stretch at Met-1 to Ala-20 is a signal peptide. Positions Cys-21–Arg-52 constitute an LRRNT domain. Residues Cys-21–Met-534 lie on the Extracellular side of the membrane. A glycan (N-linked (GlcNAc...) asparagine) is linked at Asn-29. LRR repeat units lie at residues Arg-53–Asn-74, Gly-77–Asp-98, Ser-101–Gly-122, Asn-125–Asp-146, Thr-150–Arg-171, Asn-174–Asp-195, and Lys-198–Ala-219. The region spanning Asn-242–Pro-288 is the LRRCT domain. The Ig-like domain maps to Pro-289–Ser-375. Cys-310 and Cys-359 are joined by a disulfide. Residues Asn-332, Asn-341, and Asn-384 are each glycosylated (N-linked (GlcNAc...) asparagine). The disordered stretch occupies residues Ser-383 to Arg-424. Residues Arg-407–Glu-416 show a composition bias toward gly residues. The Fibronectin type-III domain occupies Pro-421 to Asp-518. A helical transmembrane segment spans residues Ile-535–Val-555. The Cytoplasmic portion of the chain corresponds to Arg-556 to Val-789. 3 disordered regions span residues Ser-577–Val-602, Ser-619–Asp-654, and Gln-668–Pro-702. Residues Gln-583–Pro-599 show a composition bias toward pro residues. Residues Ser-619–Ala-638 are compositionally biased toward low complexity. Residues Arg-641 to Lys-650 show a composition bias toward pro residues. Positions Glu-786–Val-789 match the PDZ-binding motif.

The protein belongs to the LRFN family. As to quaternary structure, forms heteromeric complexes with LRFN1, LRFN3, LRFN4 and LRFN5. Can form homomeric complexes, but not across cell junctions. Directly interacts with 2 NMDA receptor subunits GRIN1 and GRIN2A. Interacts with DLG1, DLG2, DLG3 and DLG4. In terms of processing, glycosylated.

It localises to the membrane. Its subcellular location is the synapse. The protein resides in the postsynaptic cell membrane. Its function is as follows. Promotes neurite outgrowth in hippocampal neurons. Enhances the cell surface expression of 2 NMDA receptor subunits GRIN1 and GRIN2A. May play a role in redistributing DLG4 to the cell periphery. The sequence is that of Leucine-rich repeat and fibronectin type-III domain-containing protein 2 (LRFN2) from Homo sapiens (Human).